The chain runs to 473 residues: Ribulose bisphosphate carboxylase large chain 3 (473 aa).

2 residues coordinate substrate: asparagine 116 and threonine 166. Residue lysine 168 is the Proton acceptor of the active site. Residue lysine 170 participates in substrate binding. 3 residues coordinate Mg(2+): lysine 194, aspartate 196, and glutamate 197. N6-carboxylysine is present on lysine 194. Catalysis depends on histidine 287, which acts as the Proton acceptor. The substrate site is built by arginine 288, histidine 320, and serine 372.

It belongs to the RuBisCO large chain family. Type I subfamily. As to quaternary structure, heterohexadecamer of 8 large chains and 8 small chains. Requires Mg(2+) as cofactor.

The catalysed reaction is 2 (2R)-3-phosphoglycerate + 2 H(+) = D-ribulose 1,5-bisphosphate + CO2 + H2O. It catalyses the reaction D-ribulose 1,5-bisphosphate + O2 = 2-phosphoglycolate + (2R)-3-phosphoglycerate + 2 H(+). In terms of biological role, ruBisCO catalyzes two reactions: the carboxylation of D-ribulose 1,5-bisphosphate, the primary event in carbon dioxide fixation, as well as the oxidative fragmentation of the pentose substrate. Both reactions occur simultaneously and in competition at the same active site. The protein is Ribulose bisphosphate carboxylase large chain 3 of Nitrobacter hamburgensis (strain DSM 10229 / NCIMB 13809 / X14).